Here is a 325-residue protein sequence, read N- to C-terminus: GMP reductase (325 aa).

Cys173 acts as the Thioimidate intermediate in catalysis. Residue 202-225 coordinates NADP(+); it reads IIADGGIRSHGDIAKSVRFGATMV.

Belongs to the IMPDH/GMPR family. GuaC type 2 subfamily.

It catalyses the reaction IMP + NH4(+) + NADP(+) = GMP + NADPH + 2 H(+). Its function is as follows. Catalyzes the irreversible NADPH-dependent deamination of GMP to IMP. It functions in the conversion of nucleobase, nucleoside and nucleotide derivatives of G to A nucleotides, and in maintaining the intracellular balance of A and G nucleotides. The protein is GMP reductase of Acidovorax ebreus (strain TPSY) (Diaphorobacter sp. (strain TPSY)).